The sequence spans 932 residues: DNA mismatch repair protein MutS (932 aa).

Residue 615 to 622 (GPNMAGKS) participates in ATP binding.

It belongs to the DNA mismatch repair MutS family.

Functionally, this protein is involved in the repair of mismatches in DNA. It is possible that it carries out the mismatch recognition step. This protein has a weak ATPase activity. The protein is DNA mismatch repair protein MutS of Clostridium botulinum (strain Kyoto / Type A2).